A 644-amino-acid polypeptide reads, in one-letter code: Beta-mannosyltransferase 2 (644 aa).

The Cytoplasmic portion of the chain corresponds to 1–6 (MRTRLN). The chain crosses the membrane as a helical span at residues 7 to 27 (FLLLCIASVLSVIWIGVLLTW). Residues 28-644 (NDNNLGGISL…NDKKDLKIRQ (617 aa)) are Extracellular-facing. Asn484 is a glycosylation site (N-linked (GlcNAc...) asparagine). The stretch at 512–644 (TRGEAERRRR…NDKKDLKIRQ (133 aa)) forms a coiled coil. A disordered region spans residues 517-644 (ERRRRVAEER…NDKKDLKIRQ (128 aa)).

It belongs to the BMT family.

It is found in the membrane. Beta-mannosyltransferase involved in cell wall biosynthesis. Initiates the beta-mannosylation of core N-linked glycans. This chain is Beta-mannosyltransferase 2 (BMT2), found in Komagataella phaffii (strain GS115 / ATCC 20864) (Yeast).